We begin with the raw amino-acid sequence, 191 residues long: Pyridoxal 5'-phosphate synthase subunit PdxT (191 aa).

46–48 (GES) provides a ligand contact to L-glutamine. The Nucleophile role is filled by C78. Residues R105 and 133–134 (IR) contribute to the L-glutamine site. Catalysis depends on charge relay system residues H169 and E171.

It belongs to the glutaminase PdxT/SNO family. As to quaternary structure, in the presence of PdxS, forms a dodecamer of heterodimers. Only shows activity in the heterodimer.

The enzyme catalyses aldehydo-D-ribose 5-phosphate + D-glyceraldehyde 3-phosphate + L-glutamine = pyridoxal 5'-phosphate + L-glutamate + phosphate + 3 H2O + H(+). The catalysed reaction is L-glutamine + H2O = L-glutamate + NH4(+). It functions in the pathway cofactor biosynthesis; pyridoxal 5'-phosphate biosynthesis. Its function is as follows. Catalyzes the hydrolysis of glutamine to glutamate and ammonia as part of the biosynthesis of pyridoxal 5'-phosphate. The resulting ammonia molecule is channeled to the active site of PdxS. The protein is Pyridoxal 5'-phosphate synthase subunit PdxT of Fervidobacterium nodosum (strain ATCC 35602 / DSM 5306 / Rt17-B1).